We begin with the raw amino-acid sequence, 284 residues long: Orotidine 5'-phosphate decarboxylase (284 aa).

Lysine 95 acts as the Proton donor in catalysis.

The protein belongs to the OMP decarboxylase family. Type 2 subfamily.

It carries out the reaction orotidine 5'-phosphate + H(+) = UMP + CO2. It participates in pyrimidine metabolism; UMP biosynthesis via de novo pathway; UMP from orotate: step 2/2. The sequence is that of Orotidine 5'-phosphate decarboxylase from Leptothrix cholodnii (strain ATCC 51168 / LMG 8142 / SP-6) (Leptothrix discophora (strain SP-6)).